A 109-amino-acid chain; its full sequence is Spermidine export protein MdtI (109 aa).

Transmembrane regions (helical) follow at residues 6–26 (WVHA…NVFL), 36–56 (FYGI…SQAV), 64–84 (AYAL…WVLF), and 88–108 (LNNK…MIKL).

It belongs to the drug/metabolite transporter (DMT) superfamily. Small multidrug resistance (SMR) (TC 2.A.7.1) family. MdtI subfamily. Forms a complex with MdtJ.

It is found in the cell inner membrane. In terms of biological role, catalyzes the excretion of spermidine. This is Spermidine export protein MdtI from Citrobacter koseri (strain ATCC BAA-895 / CDC 4225-83 / SGSC4696).